The following is a 243-amino-acid chain: UDP-2,3-diacylglucosamine hydrolase (243 aa).

Residues Asp8, His10, Asp41, Asn79, and His114 each contribute to the Mn(2+) site. Residue 79-80 coordinates substrate; the sequence is NR. Substrate is bound by residues Asp122, Lys164, Lys167, and His195. Residues His195 and His197 each contribute to the Mn(2+) site.

The protein belongs to the LpxH family. Mn(2+) is required as a cofactor.

The protein localises to the cell inner membrane. It carries out the reaction UDP-2-N,3-O-bis[(3R)-3-hydroxytetradecanoyl]-alpha-D-glucosamine + H2O = 2-N,3-O-bis[(3R)-3-hydroxytetradecanoyl]-alpha-D-glucosaminyl 1-phosphate + UMP + 2 H(+). Its pathway is glycolipid biosynthesis; lipid IV(A) biosynthesis; lipid IV(A) from (3R)-3-hydroxytetradecanoyl-[acyl-carrier-protein] and UDP-N-acetyl-alpha-D-glucosamine: step 4/6. Functionally, hydrolyzes the pyrophosphate bond of UDP-2,3-diacylglucosamine to yield 2,3-diacylglucosamine 1-phosphate (lipid X) and UMP by catalyzing the attack of water at the alpha-P atom. Involved in the biosynthesis of lipid A, a phosphorylated glycolipid that anchors the lipopolysaccharide to the outer membrane of the cell. The chain is UDP-2,3-diacylglucosamine hydrolase from Vibrio vulnificus (strain YJ016).